Here is a 66-residue protein sequence, read N- to C-terminus: EAEKCBZZPGWTKGGCETCGCAQKIVPCTRETKPNPQCPRKQCCIASAGFVRDAQGNCIKFEDCPK.

5 disulfide bridges follow: C5-C28, C16-C44, C19-C58, C21-C38, and C43-C64.

It localises to the secreted. The polypeptide is Trypsin inhibitor (Ascaris suum (Pig roundworm)).